The sequence spans 421 residues: UDP-N-acetylglucosamine 1-carboxyvinyltransferase 1 (421 aa).

22–23 (KN) is a binding site for phosphoenolpyruvate. Residue arginine 95 participates in UDP-N-acetyl-alpha-D-glucosamine binding. Cysteine 119 (proton donor) is an active-site residue. Residue cysteine 119 is modified to 2-(S-cysteinyl)pyruvic acid O-phosphothioketal. UDP-N-acetyl-alpha-D-glucosamine-binding positions include 124 to 128 (RPIEQ), aspartate 308, and valine 330.

This sequence belongs to the EPSP synthase family. MurA subfamily.

It localises to the cytoplasm. The catalysed reaction is phosphoenolpyruvate + UDP-N-acetyl-alpha-D-glucosamine = UDP-N-acetyl-3-O-(1-carboxyvinyl)-alpha-D-glucosamine + phosphate. It participates in cell wall biogenesis; peptidoglycan biosynthesis. Cell wall formation. Adds enolpyruvyl to UDP-N-acetylglucosamine. The polypeptide is UDP-N-acetylglucosamine 1-carboxyvinyltransferase 1 (Staphylococcus epidermidis (strain ATCC 35984 / DSM 28319 / BCRC 17069 / CCUG 31568 / BM 3577 / RP62A)).